The chain runs to 373 residues: S-adenosylmethionine:tRNA ribosyltransferase-isomerase (373 aa).

Belongs to the QueA family. In terms of assembly, monomer.

Its subcellular location is the cytoplasm. It carries out the reaction 7-aminomethyl-7-carbaguanosine(34) in tRNA + S-adenosyl-L-methionine = epoxyqueuosine(34) in tRNA + adenine + L-methionine + 2 H(+). It participates in tRNA modification; tRNA-queuosine biosynthesis. Functionally, transfers and isomerizes the ribose moiety from AdoMet to the 7-aminomethyl group of 7-deazaguanine (preQ1-tRNA) to give epoxyqueuosine (oQ-tRNA). The chain is S-adenosylmethionine:tRNA ribosyltransferase-isomerase from Rhizobium etli (strain CIAT 652).